A 657-amino-acid polypeptide reads, in one-letter code: 1-deoxy-D-xylulose-5-phosphate synthase (657 aa).

Thiamine diphosphate is bound at residue His73. The segment at Arg91–Val110 is disordered. Residues Asp101–Val110 show a composition bias toward basic and acidic residues. Ser113–Ala115 serves as a coordination point for thiamine diphosphate. Asp145 contacts Mg(2+). Thiamine diphosphate contacts are provided by residues Gly146–Ala147, Asn175, Tyr293, and Glu375. Residue Asn175 participates in Mg(2+) binding.

It belongs to the transketolase family. DXPS subfamily. Homodimer. It depends on Mg(2+) as a cofactor. The cofactor is thiamine diphosphate.

It carries out the reaction D-glyceraldehyde 3-phosphate + pyruvate + H(+) = 1-deoxy-D-xylulose 5-phosphate + CO2. It participates in metabolic intermediate biosynthesis; 1-deoxy-D-xylulose 5-phosphate biosynthesis; 1-deoxy-D-xylulose 5-phosphate from D-glyceraldehyde 3-phosphate and pyruvate: step 1/1. Functionally, catalyzes the acyloin condensation reaction between C atoms 2 and 3 of pyruvate and glyceraldehyde 3-phosphate to yield 1-deoxy-D-xylulose-5-phosphate (DXP). This chain is 1-deoxy-D-xylulose-5-phosphate synthase, found in Arthrobacter sp. (strain FB24).